The chain runs to 705 residues: Double-strand break repair protein MRE11 (705 aa).

Positions 15, 17, 55, and 122 each coordinate Mn(2+). H123 functions as the Proton donor in the catalytic mechanism. Mn(2+)-binding residues include H220, H248, and H250. Residues 505 to 514 (RSLRSKEDSR) are compositionally biased toward basic and acidic residues. Residues 505-705 (RSLRSKEDSR…TRNYGAVRRR (201 aa)) are disordered. 2 stretches are compositionally biased toward polar residues: residues 515–538 (FTSSSQNLDTGGRSVTAQSNLNSF) and 589–605 (SMKQTTLNFSQSRSSAA). Residues 641 to 663 (GRKRAAPRGGRGRGRGATAKRGR) are compositionally biased toward basic residues.

It belongs to the MRE11/RAD32 family. Component of the MRN complex composed of two heterodimers RAD50/MRE11 associated with a single NBS1. Mn(2+) is required as a cofactor.

It is found in the nucleus. Its subcellular location is the chromosome. Functionally, core component of the MRN complex, which plays a central role in double-strand break (DSB) repair, DNA recombination, maintenance of telomere integrity and meiosis. The MRN complex is involved in the repair of DNA double-strand breaks (DSBs) via homologous recombination (HR), an error-free mechanism which primarily occurs during S and G2 phases. The complex (1) mediates the end resection of damaged DNA, which generates proper single-stranded DNA, a key initial steps in HR, and is (2) required for the recruitment of other repair factors and efficient activation of ATM and ATR upon DNA damage. Within the MRN complex, MRE11 possesses both single-strand endonuclease activity and double-strand-specific 3'-5' exonuclease activity. MRE11 first endonucleolytically cleaves the 5' strand at DNA DSB ends to prevent non-homologous end joining (NHEJ) and licence HR. It then generates a single-stranded DNA gap via 3' to 5' exonucleolytic degradation, which is required for single-strand invasion and recombination. This chain is Double-strand break repair protein MRE11, found in Oryza sativa subsp. indica (Rice).